The chain runs to 213 residues: Kiwellin (213 aa).

The first 24 residues, 1-24 (MAQLALLLLSLFLTLISLAPPGAS), serve as a signal peptide directing secretion. 3 disulfides stabilise this stretch: cysteine 28–cysteine 60, cysteine 32–cysteine 44, and cysteine 38–cysteine 49. 2 positions are modified to 4-hydroxyproline: proline 65 and proline 67. Disulfide bonds link cysteine 72–cysteine 90, cysteine 80–cysteine 172, cysteine 119–cysteine 144, and cysteine 166–cysteine 172. Residues 91–121 (SPPVTSSTPAKLTNNDFSEGGDDGGPSECDE) form a disordered region. The span at 93 to 107 (PVTSSTPAKLTNNDF) shows a compositional bias: polar residues.

This sequence belongs to the kiwellin family. In terms of processing, undergoes proteolytic cleavage by actinidin to produce kissper and KiTH. Three forms of KiTH are produced by cleavage at different sites, the main form produced in vivo is KiTH-1.

The protein localises to the secreted. PH-dependent, voltage-gated and anion-selective pore-forming peptide. The chain is Kiwellin from Actinidia deliciosa (Kiwi).